The following is a 125-amino-acid chain: Large ribosomal subunit protein bL12 (125 aa).

This sequence belongs to the bacterial ribosomal protein bL12 family. In terms of assembly, homodimer. Part of the ribosomal stalk of the 50S ribosomal subunit. Forms a multimeric L10(L12)X complex, where L10 forms an elongated spine to which 2 to 4 L12 dimers bind in a sequential fashion. Binds GTP-bound translation factors.

In terms of biological role, forms part of the ribosomal stalk which helps the ribosome interact with GTP-bound translation factors. Is thus essential for accurate translation. The polypeptide is Large ribosomal subunit protein bL12 (Sinorhizobium medicae (strain WSM419) (Ensifer medicae)).